The sequence spans 253 residues: Proteasome subunit alpha (253 aa).

The segment covering 232-242 has biased composition (low complexity); that stretch reads AAGASTAGEAG. The segment at 232–253 is disordered; the sequence is AAGASTAGEAGSAEDEGSDDEK. Acidic residues predominate over residues 243–253; sequence SAEDEGSDDEK.

It belongs to the peptidase T1A family. The 20S proteasome core is composed of 14 alpha and 14 beta subunits that assemble into four stacked heptameric rings, resulting in a barrel-shaped structure. The two inner rings, each composed of seven catalytic beta subunits, are sandwiched by two outer rings, each composed of seven alpha subunits. The catalytic chamber with the active sites is on the inside of the barrel. Has a gated structure, the ends of the cylinder being occluded by the N-termini of the alpha-subunits. Is capped by the proteasome-associated ATPase, ARC.

It localises to the cytoplasm. It participates in protein degradation; proteasomal Pup-dependent pathway. With respect to regulation, the formation of the proteasomal ATPase ARC-20S proteasome complex, likely via the docking of the C-termini of ARC into the intersubunit pockets in the alpha-rings, may trigger opening of the gate for substrate entry. Interconversion between the open-gate and close-gate conformations leads to a dynamic regulation of the 20S proteasome proteolysis activity. Component of the proteasome core, a large protease complex with broad specificity involved in protein degradation. This is Proteasome subunit alpha from Streptomyces avermitilis (strain ATCC 31267 / DSM 46492 / JCM 5070 / NBRC 14893 / NCIMB 12804 / NRRL 8165 / MA-4680).